A 300-amino-acid chain; its full sequence is F-box protein PP2-A15 (300 aa).

One can recognise an F-box domain in the interval 17–63 (MGPGLGDIPESCVACVFMYLTPPEICNLAGLNRSFRGAASSDSVWEK).

This chain is F-box protein PP2-A15 (PP2A15), found in Arabidopsis thaliana (Mouse-ear cress).